Reading from the N-terminus, the 188-residue chain is Adenine phosphoribosyltransferase (188 aa).

Belongs to the purine/pyrimidine phosphoribosyltransferase family. Homodimer.

Its subcellular location is the cytoplasm. The catalysed reaction is AMP + diphosphate = 5-phospho-alpha-D-ribose 1-diphosphate + adenine. Its pathway is purine metabolism; AMP biosynthesis via salvage pathway; AMP from adenine: step 1/1. Its function is as follows. Catalyzes a salvage reaction resulting in the formation of AMP, that is energically less costly than de novo synthesis. The chain is Adenine phosphoribosyltransferase from Neisseria meningitidis serogroup A / serotype 4A (strain DSM 15465 / Z2491).